Here is a 257-residue protein sequence, read N- to C-terminus: Ribosomal RNA small subunit methyltransferase J (257 aa).

S-adenosyl-L-methionine contacts are provided by residues 109 to 110 (RD), 125 to 126 (ER), and aspartate 179.

The protein belongs to the methyltransferase superfamily. RsmJ family.

It localises to the cytoplasm. The enzyme catalyses guanosine(1516) in 16S rRNA + S-adenosyl-L-methionine = N(2)-methylguanosine(1516) in 16S rRNA + S-adenosyl-L-homocysteine + H(+). Specifically methylates the guanosine in position 1516 of 16S rRNA. The polypeptide is Ribosomal RNA small subunit methyltransferase J (Actinobacillus succinogenes (strain ATCC 55618 / DSM 22257 / CCUG 43843 / 130Z)).